The sequence spans 175 residues: Co-chaperone protein HscB homolog (175 aa).

The region spanning 7 to 79 (SHFALFNLPE…LKRARYLLSL (73 aa)) is the J domain.

Belongs to the HscB family. As to quaternary structure, interacts with HscA and stimulates its ATPase activity.

Functionally, co-chaperone involved in the maturation of iron-sulfur cluster-containing proteins. Seems to help targeting proteins to be folded toward HscA. The polypeptide is Co-chaperone protein HscB homolog (Paraburkholderia phymatum (strain DSM 17167 / CIP 108236 / LMG 21445 / STM815) (Burkholderia phymatum)).